The sequence spans 110 residues: Prothymosin alpha (110 aa).

Met-1 bears the N-acetylmethionine mark. Residues 1–110 (MSDAAVDTSS…TKKQKTDEDD (110 aa)) form a disordered region. An N-acetylserine; in Prothymosin alpha, N-terminally processed modification is found at Ser-2. Ser-2 bears the Phosphoserine mark. Thr-8 is modified (phosphothreonine). Ser-9 and Ser-10 each carry phosphoserine. Residues Thr-13 and Thr-14 each carry the phosphothreonine modification. Basic and acidic residues predominate over residues 13-31 (TTKDLKEKKEVVEEAENGR). Lys-15 carries the N6-acetyllysine; alternate modification. At Lys-15 the chain carries N6-succinyllysine; alternate. Residues 42 to 83 (ENGEQEADNEVDEEEEEGGEEEEEEEEGDGEEEDGDEDEEAE) show a composition bias toward acidic residues. Positions 100-110 (DTKKQKTDEDD) are enriched in basic and acidic residues. Residue Thr-101 is modified to Phosphothreonine. At Lys-102 the chain carries N6-acetyllysine; alternate. A Glycyl lysine isopeptide (Lys-Gly) (interchain with G-Cter in SUMO2); alternate cross-link involves residue Lys-102. Thr-106 carries the phosphothreonine modification.

This sequence belongs to the pro/parathymosin family. Interacts with NUPR1; regulates apoptotic process. Covalently linked to a small RNA of about 20 nucleotides.

The protein localises to the nucleus. Prothymosin alpha may mediate immune function by conferring resistance to certain opportunistic infections. The sequence is that of Prothymosin alpha (PTMA) from Pongo abelii (Sumatran orangutan).